A 146-amino-acid polypeptide reads, in one-letter code: Transcription initiation factor TFIID subunit 10b (146 aa).

The interval glycine 16–aspartate 43 is disordered.

The protein belongs to the TAF10 family. In terms of assembly, belongs to the TFIID complex which is composed of TATA binding protein (Tbp) and a number of TBP-associated factors (TAFs). The N-terminus interacts with the histone fold of Taf8. In terms of tissue distribution, at embryonic stage 9, expression is seen in the mesodermal layer and midgut primordia. The mesoderm-specific expression persists in later stages of development and at its highest level is detected in midgut, hindgut, and differentiating somatic muscle fibers. Coexpressed with Taf10 in the lateral epidermis and anal plate.

It localises to the cytoplasm. The protein localises to the nucleus. Its function is as follows. TFIID is a multimeric protein complex that plays a central role in mediating promoter responses to various activators and repressors. This Drosophila melanogaster (Fruit fly) protein is Transcription initiation factor TFIID subunit 10b.